The chain runs to 31 residues: Scolopendra 20566.01 Da toxin (31 aa).

Belongs to the CRISP family. Venom allergen 5-like subfamily. Post-translationally, contains 3 disulfide bonds. Expressed by the venom gland.

The protein resides in the secreted. This Scolopendra angulata (Barbados giant red centipede) protein is Scolopendra 20566.01 Da toxin.